Reading from the N-terminus, the 180-residue chain is NAD(P)H-quinone oxidoreductase subunit I, chloroplastic (180 aa).

4Fe-4S ferredoxin-type domains follow at residues 55-84 and 95-124; these read GRIH…VDWK and LNYS…MTEE. 8 residues coordinate [4Fe-4S] cluster: C64, C67, C70, C74, C104, C107, C110, and C114.

The protein belongs to the complex I 23 kDa subunit family. As to quaternary structure, NDH is composed of at least 16 different subunits, 5 of which are encoded in the nucleus. Requires [4Fe-4S] cluster as cofactor.

Its subcellular location is the plastid. The protein resides in the chloroplast thylakoid membrane. The catalysed reaction is a plastoquinone + NADH + (n+1) H(+)(in) = a plastoquinol + NAD(+) + n H(+)(out). The enzyme catalyses a plastoquinone + NADPH + (n+1) H(+)(in) = a plastoquinol + NADP(+) + n H(+)(out). In terms of biological role, NDH shuttles electrons from NAD(P)H:plastoquinone, via FMN and iron-sulfur (Fe-S) centers, to quinones in the photosynthetic chain and possibly in a chloroplast respiratory chain. The immediate electron acceptor for the enzyme in this species is believed to be plastoquinone. Couples the redox reaction to proton translocation, and thus conserves the redox energy in a proton gradient. This Sorghum bicolor (Sorghum) protein is NAD(P)H-quinone oxidoreductase subunit I, chloroplastic.